We begin with the raw amino-acid sequence, 506 residues long: Cytochrome P450 4B1 (506 aa).

Residue Glu310 participates in heme binding. Residue Ser431 is modified to Phosphoserine. Cys448 is a binding site for heme.

The protein belongs to the cytochrome P450 family. Heme is required as a cofactor.

The protein resides in the endoplasmic reticulum membrane. The protein localises to the microsome membrane. It carries out the reaction an organic molecule + reduced [NADPH--hemoprotein reductase] + O2 = an alcohol + oxidized [NADPH--hemoprotein reductase] + H2O + H(+). In terms of biological role, cytochromes P450 are a group of heme-thiolate monooxygenases. In liver microsomes, this enzyme is involved in an NADPH-dependent electron transport pathway. It oxidizes a variety of structurally unrelated compounds, including steroids, fatty acids, and xenobiotics. This is Cytochrome P450 4B1 (CYP4B1) from Oryctolagus cuniculus (Rabbit).